The chain runs to 218 residues: Histone H1 (218 aa).

Low complexity-rich tracts occupy residues 1-19 (MSET…GAKA) and 27-39 (AAGG…PAGP). 2 disordered regions span residues 1 to 41 (MSET…GPSV) and 89 to 218 (VGKG…PKKK). An N-acetylserine modification is found at Ser-2. An H15 domain is found at 37-110 (AGPSVTELIT…GASGSFKLNK (74 aa)). Composition is skewed to basic residues over residues 119-133 (ATKK…KPAA), 141-158 (KKPK…KAKK), 166-184 (KAAK…KKAA), and 191-218 (KAVK…PKKK).

The protein belongs to the histone H1/H5 family.

The protein resides in the nucleus. It is found in the chromosome. Histones H1 are necessary for the condensation of nucleosome chains into higher-order structures. The polypeptide is Histone H1 (Anas platyrhynchos (Mallard)).